The primary structure comprises 464 residues: Protein transport protein HofB homolog (464 aa).

264-271 provides a ligand contact to ATP; the sequence is GPTGSGKS.

The protein belongs to the GSP E family.

This Haemophilus influenzae (strain ATCC 51907 / DSM 11121 / KW20 / Rd) protein is Protein transport protein HofB homolog (hofB).